The following is a 1001-amino-acid chain: E3 ubiquitin-protein ligase BRE1B (1001 aa).

The tract at residues 1-40 (MSGLSNKRAAGDGGSGPPEKKMNREEKTTTTLIEPIRLGG) is disordered. Residues 18-28 (PEKKMNREEKT) are compositionally biased toward basic and acidic residues. The residue at position 20 (Lys-20) is an N6-acetyllysine. Ser-42 is modified (phosphoserine). Residues 55 to 91 (KNKKLAERLEQRQACEDELRERIEKLEKRQATDDATL) are a coiled coil. Residues 122 to 142 (TEVPGCQEGLTRDVIPRPDPG) are disordered. Coiled coils occupy residues 189 to 377 (KAAV…LRSL) and 437 to 525 (LQKK…ASGS). N6-acetyllysine is present on residues Lys-355 and Lys-517. Positions 519–647 (RAQASGSSHC…KAKVEEAKRK (129 aa)) are disordered. Positions 565–576 (ALLAGATSATSS) are enriched in low complexity. Glycyl lysine isopeptide (Lys-Gly) (interchain with G-Cter in SUMO2) cross-links involve residues Lys-578 and Lys-579. A phosphoserine mark is found at Ser-584 and Ser-585. Composition is skewed to basic and acidic residues over residues 602–619 (RGRE…EREG) and 633–647 (RADR…AKRK). The stretch at 627–946 (AASTLSRADR…EEIKEYKARL (320 aa)) forms a coiled coil. Residues 948–987 (CPCCNTRKKDAVLTKCFHVFCFECVRGRYEARQRKCPKCN) form an RING-type zinc finger.

The protein belongs to the BRE1 family. As to quaternary structure, component of the RNF20/40 complex (also known as BRE1 complex) probably composed of 2 copies of RNF20/BRE1A and 2 copies of RNF40/BRE1B. Interacts with UBE2E1/UBCH6. Interacts with RB1 and WAC.

It localises to the nucleus. The enzyme catalyses S-ubiquitinyl-[E2 ubiquitin-conjugating enzyme]-L-cysteine + [acceptor protein]-L-lysine = [E2 ubiquitin-conjugating enzyme]-L-cysteine + N(6)-ubiquitinyl-[acceptor protein]-L-lysine.. Its pathway is protein modification; protein ubiquitination. Component of the RNF20/40 E3 ubiquitin-protein ligase complex that mediates monoubiquitination of 'Lys-120' of histone H2B (H2BK120ub1). H2BK120ub1 gives a specific tag for epigenetic transcriptional activation and is also prerequisite for histone H3 'Lys-4' and 'Lys-79' methylation (H3K4me and H3K79me, respectively). It thereby plays a central role in histone code and gene regulation. The RNF20/40 complex forms a H2B ubiquitin ligase complex in cooperation with the E2 enzyme UBE2A or UBE2B; reports about the cooperation with UBE2E1/UBCH are contradictory. Required for transcriptional activation of Hox genes. The sequence is that of E3 ubiquitin-protein ligase BRE1B (Rnf40) from Mus musculus (Mouse).